A 97-amino-acid polypeptide reads, in one-letter code: YcgL domain-containing protein CPS_3517 (97 aa).

The region spanning 1–85 (MLCAIYKSAR…PQEDLLKEHK (85 aa)) is the YcgL domain.

This is YcgL domain-containing protein CPS_3517 from Colwellia psychrerythraea (strain 34H / ATCC BAA-681) (Vibrio psychroerythus).